The following is a 258-amino-acid chain: Imidazole glycerol phosphate synthase subunit HisF (258 aa).

Active-site residues include Asp-11 and Asp-130.

This sequence belongs to the HisA/HisF family. As to quaternary structure, heterodimer of HisH and HisF.

The protein localises to the cytoplasm. It carries out the reaction 5-[(5-phospho-1-deoxy-D-ribulos-1-ylimino)methylamino]-1-(5-phospho-beta-D-ribosyl)imidazole-4-carboxamide + L-glutamine = D-erythro-1-(imidazol-4-yl)glycerol 3-phosphate + 5-amino-1-(5-phospho-beta-D-ribosyl)imidazole-4-carboxamide + L-glutamate + H(+). The protein operates within amino-acid biosynthesis; L-histidine biosynthesis; L-histidine from 5-phospho-alpha-D-ribose 1-diphosphate: step 5/9. In terms of biological role, IGPS catalyzes the conversion of PRFAR and glutamine to IGP, AICAR and glutamate. The HisF subunit catalyzes the cyclization activity that produces IGP and AICAR from PRFAR using the ammonia provided by the HisH subunit. The sequence is that of Imidazole glycerol phosphate synthase subunit HisF from Gluconacetobacter diazotrophicus (strain ATCC 49037 / DSM 5601 / CCUG 37298 / CIP 103539 / LMG 7603 / PAl5).